We begin with the raw amino-acid sequence, 362 residues long: uncharacterized protein (362 aa).

N-acetylalanine is present on alanine 2.

This sequence belongs to the Gfo/Idh/MocA family. In terms of assembly, homodimer.

This is an uncharacterized protein from Arabidopsis thaliana (Mouse-ear cress).